A 229-amino-acid polypeptide reads, in one-letter code: Uracil-DNA glycosylase (229 aa).

The active-site Proton acceptor is D64.

Belongs to the uracil-DNA glycosylase (UDG) superfamily. UNG family.

It is found in the cytoplasm. It carries out the reaction Hydrolyzes single-stranded DNA or mismatched double-stranded DNA and polynucleotides, releasing free uracil.. Functionally, excises uracil residues from the DNA which can arise as a result of misincorporation of dUMP residues by DNA polymerase or due to deamination of cytosine. The protein is Uracil-DNA glycosylase of Salmonella arizonae (strain ATCC BAA-731 / CDC346-86 / RSK2980).